The primary structure comprises 262 residues: Phosphatidylglycerol--prolipoprotein diacylglyceryl transferase (262 aa).

4 helical membrane passes run 9–29 (LGPL…ILAV), 41–61 (IIPD…ILGA), 80–100 (IFAI…GALV), and 109–129 (LINT…AQSL). An a 1,2-diacyl-sn-glycero-3-phospho-(1'-sn-glycerol)-binding site is contributed by arginine 131. Transmembrane regions (helical) follow at residues 167-187 (QPTF…ILIF), 197-217 (GHIT…IEGM), and 226-246 (GLRV…MIVI).

It belongs to the Lgt family.

It is found in the cell membrane. It carries out the reaction L-cysteinyl-[prolipoprotein] + a 1,2-diacyl-sn-glycero-3-phospho-(1'-sn-glycerol) = an S-1,2-diacyl-sn-glyceryl-L-cysteinyl-[prolipoprotein] + sn-glycerol 1-phosphate + H(+). It participates in protein modification; lipoprotein biosynthesis (diacylglyceryl transfer). In terms of biological role, catalyzes the transfer of the diacylglyceryl group from phosphatidylglycerol to the sulfhydryl group of the N-terminal cysteine of a prolipoprotein, the first step in the formation of mature lipoproteins. The sequence is that of Phosphatidylglycerol--prolipoprotein diacylglyceryl transferase from Streptococcus pneumoniae (strain Taiwan19F-14).